We begin with the raw amino-acid sequence, 541 residues long: Chaperonin GroEL 2 (541 aa).

Residues 29 to 32, 86 to 90, Gly-413, 476 to 478, and Asp-492 each bind ATP; these read TLGP, DGTTT, and NAA.

The protein belongs to the chaperonin (HSP60) family. Forms a cylinder of 14 subunits composed of two heptameric rings stacked back-to-back. Interacts with the co-chaperonin GroES.

It is found in the secreted. The protein resides in the capsule. Its subcellular location is the cell surface. It localises to the cell wall. It catalyses the reaction ATP + H2O + a folded polypeptide = ADP + phosphate + an unfolded polypeptide.. Its function is as follows. Together with its co-chaperonin GroES, plays an essential role in assisting protein folding. The GroEL-GroES system forms a nano-cage that allows encapsulation of the non-native substrate proteins and provides a physical environment optimized to promote and accelerate protein folding. This Mycolicibacterium vanbaalenii (strain DSM 7251 / JCM 13017 / BCRC 16820 / KCTC 9966 / NRRL B-24157 / PYR-1) (Mycobacterium vanbaalenii) protein is Chaperonin GroEL 2.